The primary structure comprises 207 residues: LexA repressor (207 aa).

Positions 28–48 (RAEIAQKLGFKSANAAEEHLK) form a DNA-binding region, H-T-H motif. Residues Ser124 and Lys161 each act as for autocatalytic cleavage activity in the active site.

This sequence belongs to the peptidase S24 family. Homodimer.

It catalyses the reaction Hydrolysis of Ala-|-Gly bond in repressor LexA.. Functionally, represses a number of genes involved in the response to DNA damage (SOS response), including recA and lexA. In the presence of single-stranded DNA, RecA interacts with LexA causing an autocatalytic cleavage which disrupts the DNA-binding part of LexA, leading to derepression of the SOS regulon and eventually DNA repair. The sequence is that of LexA repressor from Aeromonas salmonicida (strain A449).